Here is a 76-residue protein sequence, read N- to C-terminus: Pigment-dispersing hormone A peptides (76 aa).

An N-terminal signal peptide occupies residues 1–20; sequence MRSAMVVLVLVAMVAVFTRA. Ala-73 carries the post-translational modification Alanine amide.

It belongs to the arthropod PDH family. In terms of tissue distribution, optical ganglia of the eyestalk.

The protein resides in the secreted. Its function is as follows. The pigment-dispersing hormone causes the migration of the distal retinal pigment into the proximal end of the pigment chromatophore cells and thus decreases the amount of light entering the retinulas. May also function as a neurotransmitter and/or neuromodulator. This Faxonius limosus (Spinycheek crayfish) protein is Pigment-dispersing hormone A peptides.